Reading from the N-terminus, the 145-residue chain is MLHTIKPVTNARKSTKRLGRGPGSGTGKTSGKGHKGQLARSGKTLRPGFEGGQIPFFQRIPKRGFHNFSQKRYALLNLKTLESFPQDTVVTPQLLLEKKIIKDQLCGIKVLSQGTLTKKLLVKASKFSKQAQAAILAVGGNIEVI.

A disordered region spans residues 1–50 (MLHTIKPVTNARKSTKRLGRGPGSGTGKTSGKGHKGQLARSGKTLRPGFE). A compositionally biased stretch (gly residues) spans 20-30 (RGPGSGTGKTS).

It belongs to the universal ribosomal protein uL15 family. In terms of assembly, part of the 50S ribosomal subunit.

Functionally, binds to the 23S rRNA. The chain is Large ribosomal subunit protein uL15 from Aster yellows witches'-broom phytoplasma (strain AYWB).